The sequence spans 412 residues: Multifunctional CCA protein (412 aa).

Residues G8 and R11 each coordinate ATP. Residues G8 and R11 each coordinate CTP. Mg(2+) is bound by residues D21 and D23. The ATP site is built by R91, R137, and R140. R91, R137, and R140 together coordinate CTP. Residues 228 to 329 (TGIHTLMTLS…VKLFDSIDAW (102 aa)) form the HD domain.

This sequence belongs to the tRNA nucleotidyltransferase/poly(A) polymerase family. Bacterial CCA-adding enzyme type 1 subfamily. Monomer. Can also form homodimers and oligomers. Requires Mg(2+) as cofactor. Ni(2+) serves as cofactor.

It catalyses the reaction a tRNA precursor + 2 CTP + ATP = a tRNA with a 3' CCA end + 3 diphosphate. It carries out the reaction a tRNA with a 3' CCA end + 2 CTP + ATP = a tRNA with a 3' CCACCA end + 3 diphosphate. In terms of biological role, catalyzes the addition and repair of the essential 3'-terminal CCA sequence in tRNAs without using a nucleic acid template. Adds these three nucleotides in the order of C, C, and A to the tRNA nucleotide-73, using CTP and ATP as substrates and producing inorganic pyrophosphate. tRNA 3'-terminal CCA addition is required both for tRNA processing and repair. Also involved in tRNA surveillance by mediating tandem CCA addition to generate a CCACCA at the 3' terminus of unstable tRNAs. While stable tRNAs receive only 3'-terminal CCA, unstable tRNAs are marked with CCACCA and rapidly degraded. The sequence is that of Multifunctional CCA protein from Escherichia coli O1:K1 / APEC.